The following is a 247-amino-acid chain: Adenosylcobinamide-GDP ribazoletransferase (247 aa).

Transmembrane regions (helical) follow at residues 34-54, 59-79, 113-133, 138-158, and 194-214; these read IITF…VFMV, CGVP…TGGF, GGLA…ELAL, ILAL…LLMY, and VLLP…AIFI.

It belongs to the CobS family. It depends on Mg(2+) as a cofactor.

The protein resides in the cell inner membrane. It catalyses the reaction alpha-ribazole + adenosylcob(III)inamide-GDP = adenosylcob(III)alamin + GMP + H(+). It carries out the reaction alpha-ribazole 5'-phosphate + adenosylcob(III)inamide-GDP = adenosylcob(III)alamin 5'-phosphate + GMP + H(+). The protein operates within cofactor biosynthesis; adenosylcobalamin biosynthesis; adenosylcobalamin from cob(II)yrinate a,c-diamide: step 7/7. Its function is as follows. Joins adenosylcobinamide-GDP and alpha-ribazole to generate adenosylcobalamin (Ado-cobalamin). Also synthesizes adenosylcobalamin 5'-phosphate from adenosylcobinamide-GDP and alpha-ribazole 5'-phosphate. The chain is Adenosylcobinamide-GDP ribazoletransferase from Shigella boydii serotype 4 (strain Sb227).